Reading from the N-terminus, the 513-residue chain is ATP synthase subunit alpha (513 aa).

169-176 (GDRQIGKT) contacts ATP.

This sequence belongs to the ATPase alpha/beta chains family. As to quaternary structure, F-type ATPases have 2 components, CF(1) - the catalytic core - and CF(0) - the membrane proton channel. CF(1) has five subunits: alpha(3), beta(3), gamma(1), delta(1), epsilon(1). CF(0) has three main subunits: a(1), b(2) and c(9-12). The alpha and beta chains form an alternating ring which encloses part of the gamma chain. CF(1) is attached to CF(0) by a central stalk formed by the gamma and epsilon chains, while a peripheral stalk is formed by the delta and b chains.

It is found in the cell inner membrane. It carries out the reaction ATP + H2O + 4 H(+)(in) = ADP + phosphate + 5 H(+)(out). Produces ATP from ADP in the presence of a proton gradient across the membrane. The alpha chain is a regulatory subunit. The protein is ATP synthase subunit alpha of Francisella tularensis subsp. tularensis (strain WY96-3418).